A 254-amino-acid chain; its full sequence is Imidazole glycerol phosphate synthase subunit HisF (254 aa).

Residues D12 and D131 contribute to the active site.

The protein belongs to the HisA/HisF family. In terms of assembly, heterodimer of HisH and HisF.

It is found in the cytoplasm. The enzyme catalyses 5-[(5-phospho-1-deoxy-D-ribulos-1-ylimino)methylamino]-1-(5-phospho-beta-D-ribosyl)imidazole-4-carboxamide + L-glutamine = D-erythro-1-(imidazol-4-yl)glycerol 3-phosphate + 5-amino-1-(5-phospho-beta-D-ribosyl)imidazole-4-carboxamide + L-glutamate + H(+). It functions in the pathway amino-acid biosynthesis; L-histidine biosynthesis; L-histidine from 5-phospho-alpha-D-ribose 1-diphosphate: step 5/9. In terms of biological role, IGPS catalyzes the conversion of PRFAR and glutamine to IGP, AICAR and glutamate. The HisF subunit catalyzes the cyclization activity that produces IGP and AICAR from PRFAR using the ammonia provided by the HisH subunit. This chain is Imidazole glycerol phosphate synthase subunit HisF, found in Janthinobacterium sp. (strain Marseille) (Minibacterium massiliensis).